The chain runs to 1362 residues: DNA-directed RNA polymerase subunit beta (1362 aa).

It belongs to the RNA polymerase beta chain family. The RNAP catalytic core consists of 2 alpha, 1 beta, 1 beta' and 1 omega subunit. When a sigma factor is associated with the core the holoenzyme is formed, which can initiate transcription.

The enzyme catalyses RNA(n) + a ribonucleoside 5'-triphosphate = RNA(n+1) + diphosphate. Its function is as follows. DNA-dependent RNA polymerase catalyzes the transcription of DNA into RNA using the four ribonucleoside triphosphates as substrates. This chain is DNA-directed RNA polymerase subunit beta, found in Acidithiobacillus ferrooxidans (strain ATCC 23270 / DSM 14882 / CIP 104768 / NCIMB 8455) (Ferrobacillus ferrooxidans (strain ATCC 23270)).